We begin with the raw amino-acid sequence, 635 residues long: Threonine--tRNA ligase (635 aa).

Residues 1–58 (MIRVICNNETVELPKGATAADFASKIKNSHYFAGVVINDQIKDLSTTLNEGDTLRFVT) form the TGS domain. Residues 237–528 (DHRVLGAKLD…LIEHFKGKFP (292 aa)) form a catalytic region. Zn(2+) is bound by residues cysteine 328, histidine 379, and histidine 505.

It belongs to the class-II aminoacyl-tRNA synthetase family. Homodimer. Zn(2+) is required as a cofactor.

The protein localises to the cytoplasm. It catalyses the reaction tRNA(Thr) + L-threonine + ATP = L-threonyl-tRNA(Thr) + AMP + diphosphate + H(+). Functionally, catalyzes the attachment of threonine to tRNA(Thr) in a two-step reaction: L-threonine is first activated by ATP to form Thr-AMP and then transferred to the acceptor end of tRNA(Thr). Also edits incorrectly charged L-seryl-tRNA(Thr). In Chlamydia caviae (strain ATCC VR-813 / DSM 19441 / 03DC25 / GPIC) (Chlamydophila caviae), this protein is Threonine--tRNA ligase.